The sequence spans 610 residues: Modifier of mdg4 (610 aa).

Residues 1–160 are self-association; that stretch reads MADDEQFSLC…QQPRASARYK (160 aa). An interaction with Chi region spans residues 1 to 308; that stretch reads MADDEQFSLC…EEAEYIDLPM (308 aa). Positions 32–98 constitute a BTB domain; that stretch reads VDVSLAAEGQ…MYCGEVNVKQ (67 aa). 4 disordered regions span residues 115–156, 219–259, 311–339, and 386–432; these read GLTD…PRAS, VSTN…DSTT, PTKS…DDTY, and ESSF…PKPK. The span at 122–135 shows a compositional bias: pro residues; the sequence is APQPPQESSPPPAA. Positions 136-156 are enriched in low complexity; the sequence is PHVQQQQIPAQRVQRQQPRAS. Residues 222 to 238 show a composition bias toward polar residues; that stretch reads NKRSAQRSSLTPASSSA. A Phosphoserine modification is found at Ser-230. Basic and acidic residues predominate over residues 312-325; it reads TKSEPDYSEDHGDA. The span at 386 to 400 shows a compositional bias: polar residues; the sequence is ESSFVDTSGDQGNTE. Residues 401–410 are compositionally biased toward low complexity; sequence AQAATSASAT. The span at 422 to 432 shows a compositional bias: basic and acidic residues; the sequence is TKVEDQTPKPK. An FLYWCH-type zinc finger spans residues 452 to 512; the sequence is YASTTKGGVK…VFPYEGEHVH (61 aa). Positions 551 to 610 are interaction with su(Hw); that stretch reads LEEADDKEDEDFEEFEIQEIDEIELDEPEKTPAKEEEVDPNDFREKIKRRLQKALQNKKK. Over residues 567–577 the composition is skewed to acidic residues; sequence IQEIDEIELDE. Residues 567–595 form a disordered region; the sequence is IQEIDEIELDEPEKTPAKEEEVDPNDFRE. Over residues 578 to 595 the composition is skewed to basic and acidic residues; that stretch reads PEKTPAKEEEVDPNDFRE.

As to quaternary structure, can self-associate. Interacts with Chi. Interacts with Top2. Isoform mod2.2: Component of the gypsy chromatin insulator complex, composed of Cp190, mod(mdg4) and su(Hw). The gypsy chromatin insulator complex interacts with Topors via mod(mdg4) and su(Hw). Isoform mod2.2 interacts with Trl/GAGA and interaction with this protein may bypass the repressive effects of the su(Hw) insulator.

Its subcellular location is the nucleus. The protein resides in the chromosome. Functionally, component of the gypsy chromatin insulator complex which is required for the function of the gypsy chromatin insulator and other endogenous chromatin insulators. Chromatin insulators are regulatory elements which establish independent domains of transcriptional activity within eukaryotic genomes. Insulators have two defining properties; they can block the communication between an enhancer and a promoter when placed between them and can also buffer transgenes from position effect variegation (PEV). Insulators are proposed to structure the chromatin fiber into independent domains of differing transcriptional potential by promoting the formation of distinct chromatin loops. This chromatin looping may involve the formation of insulator bodies, where homotypic interactions between individual subunits of the insulator complex could promote the clustering of widely spaced insulators at the nuclear periphery. Within the gypsy insulator complex, this protein may control the nature of the repressive effect of su(Hw): in the absence of mod(mdg4) protein, su(Hw) exerts a bidirectional silencing effect, whereas in the presence of mod(mdg4), the silencing effect is unidirectional. Isoform H is specifically required to maintain the pairing of achiasmate homologs in male meiosis I which is mediated by the rDNA repeats on the achiasmate X-Y bivalents. Isoform H also plays a role in apoptotic regulatory pathways. This Drosophila melanogaster (Fruit fly) protein is Modifier of mdg4.